Consider the following 158-residue polypeptide: Ribosome-binding factor A (158 aa).

Residues 127 to 158 (RQGAVHAGDADPYKESAAEEPAAYEDDERRPD) form a disordered region. Residues 134 to 143 (GDADPYKESA) show a composition bias toward basic and acidic residues.

The protein belongs to the RbfA family. Monomer. Binds 30S ribosomal subunits, but not 50S ribosomal subunits or 70S ribosomes.

It localises to the cytoplasm. One of several proteins that assist in the late maturation steps of the functional core of the 30S ribosomal subunit. Associates with free 30S ribosomal subunits (but not with 30S subunits that are part of 70S ribosomes or polysomes). Required for efficient processing of 16S rRNA. May interact with the 5'-terminal helix region of 16S rRNA. This is Ribosome-binding factor A from Mycobacteroides abscessus (strain ATCC 19977 / DSM 44196 / CCUG 20993 / CIP 104536 / JCM 13569 / NCTC 13031 / TMC 1543 / L948) (Mycobacterium abscessus).